A 126-amino-acid chain; its full sequence is Glycine cleavage system H protein (126 aa).

The region spanning 22-103 is the Lipoyl-binding domain; the sequence is KAYIGITDYA…PYGSWMALVE (82 aa). Lys63 carries the N6-lipoyllysine modification.

Belongs to the GcvH family. In terms of assembly, the glycine cleavage system is composed of four proteins: P, T, L and H. Requires (R)-lipoate as cofactor.

In terms of biological role, the glycine cleavage system catalyzes the degradation of glycine. The H protein shuttles the methylamine group of glycine from the P protein to the T protein. The sequence is that of Glycine cleavage system H protein from Thermoanaerobacter sp. (strain X514).